A 440-amino-acid chain; its full sequence is MTSPSAPSSAERPRLPGALDGPRLAAAAAEHGTPLWLYDAATIRAQIDRLRRFDVIRYAQKACSNLHILRLMREEGVHVDAVSEGEIERALAAGYRVGGDDEPIVFTADLLNRSTLRRVVELGIPVNAGSPQMLDQVGRAAPGHPVWIRINPGFGHGHSRKTNTGGEHSKHGIWHEHLEESLALVDRHGLDLVGLHMHIGSGVDYGHLESVCETMVKQVRMAGRDIRAISAGGGLSVPYTPGDPEIDTDRYFELWDAARRELVSELGHPVRLEIEPGRFLVAGAGVLAAEVRAQKPVGSNYFVLVDAGFNDLMRPAMYGSNHRVSVLDADGAPRASDARDTVLAGPLCESGDVFTQVEGGDVEPVPVPRTDVGDLVVFHDTGAYGASMSSTYNSRPLIPEVLVDGAETRLIRRRQTVAELLAPELEPGPALSPRPSRDPR.

N6-(pyridoxal phosphate)lysine is present on K61. Pyridoxal 5'-phosphate contacts are provided by residues G234 and 275–278 (EPGR). The substrate site is built by R278, R314, and Y318. The active-site Proton donor is the C348. Substrate-binding residues include E349 and Y384. Y384 contributes to the pyridoxal 5'-phosphate binding site. Low complexity predominate over residues 421–431 (LAPELEPGPAL). The disordered stretch occupies residues 421-440 (LAPELEPGPALSPRPSRDPR).

Belongs to the Orn/Lys/Arg decarboxylase class-II family. LysA subfamily. As to quaternary structure, homodimer. The cofactor is pyridoxal 5'-phosphate.

The enzyme catalyses meso-2,6-diaminopimelate + H(+) = L-lysine + CO2. Its pathway is amino-acid biosynthesis; L-lysine biosynthesis via DAP pathway; L-lysine from DL-2,6-diaminopimelate: step 1/1. Specifically catalyzes the decarboxylation of meso-diaminopimelate (meso-DAP) to L-lysine. This chain is Diaminopimelate decarboxylase, found in Streptomyces coelicolor (strain ATCC BAA-471 / A3(2) / M145).